We begin with the raw amino-acid sequence, 210 residues long: MSHDHADIVNALIPMVVEQSNRGERSFDIYSRLLRERIIFVTGQVEDHMASVICAQLLFLEAENPKKDIFLYINSPGGVVTAGLAIHDTMQYIRPKVGTLCIGQAASMGSFLLAAGEPGMRVATTNSRIMIHQPSGGAQGMAADIEIQAREILRMRKRLNALYAKYTNQPIEEIEKAMDRDNFLEADEAKAFGLIDKVFDKRPVASEEKE.

S107 functions as the Nucleophile in the catalytic mechanism. H132 is an active-site residue.

The protein belongs to the peptidase S14 family. As to quaternary structure, fourteen ClpP subunits assemble into 2 heptameric rings which stack back to back to give a disk-like structure with a central cavity, resembling the structure of eukaryotic proteasomes.

Its subcellular location is the cytoplasm. The enzyme catalyses Hydrolysis of proteins to small peptides in the presence of ATP and magnesium. alpha-casein is the usual test substrate. In the absence of ATP, only oligopeptides shorter than five residues are hydrolyzed (such as succinyl-Leu-Tyr-|-NHMec, and Leu-Tyr-Leu-|-Tyr-Trp, in which cleavage of the -Tyr-|-Leu- and -Tyr-|-Trp bonds also occurs).. Functionally, cleaves peptides in various proteins in a process that requires ATP hydrolysis. Has a chymotrypsin-like activity. Plays a major role in the degradation of misfolded proteins. The sequence is that of ATP-dependent Clp protease proteolytic subunit from Zymomonas mobilis subsp. mobilis (strain ATCC 31821 / ZM4 / CP4).